A 471-amino-acid chain; its full sequence is Probable nucleoredoxin 3 (471 aa).

2 consecutive Thioredoxin domains span residues 15 to 173 and 179 to 334; these read VSIP…ARRQ and QLLG…KERD.

Belongs to the nucleoredoxin family.

It carries out the reaction [protein]-dithiol + NAD(+) = [protein]-disulfide + NADH + H(+). The catalysed reaction is [protein]-dithiol + NADP(+) = [protein]-disulfide + NADPH + H(+). Functionally, probable thiol-disulfide oxidoreductase that may participate in various redox reactions. This is Probable nucleoredoxin 3 from Oryza sativa subsp. japonica (Rice).